The chain runs to 291 residues: MSEKLQKVLARAGHGSRREIESIIEAGRVSVDGKIATLGDRVEVTPGLKIRIDGHLISVKESAEQICRVLAYYKPEGELCTRNDPEGRPTVFDRLPKLRGARWIAVGRLDVNTCGLLLFTTDGELANRLMHPSREVEREYAVRVFGQVDESKLRDLSRGVQLEDGPAAFKTIKFSGGEGINQWYNVTLTEGRNREVRRLWEAVGVQVSRLIRVRYGDIPLPKGLPRGGWTELDFAQTNYLRGLVELPPETSSKVAVEKDRRRMKANQIRRAVKRHSQIAGGRRSGGRNNNG.

In terms of domain architecture, S4 RNA-binding spans 3-63 (EKLQKVLARA…GHLISVKESA (61 aa)). Catalysis depends on aspartate 110, which acts as the Nucleophile. The interval 272–291 (VKRHSQIAGGRRSGGRNNNG) is disordered.

Belongs to the pseudouridine synthase RsuA family.

It catalyses the reaction uridine(2605) in 23S rRNA = pseudouridine(2605) in 23S rRNA. Functionally, responsible for synthesis of pseudouridine from uracil-2605 in 23S ribosomal RNA. The sequence is that of Ribosomal large subunit pseudouridine synthase B (rluB) from Salmonella typhi.